Here is a 922-residue protein sequence, read N- to C-terminus: MSNERVSTGSLGERLMLRTRSTRGSVRETLSKAIRSTLGRASSMERKDMPDRPKYGTALTAMTSTTPPSPKDRSSDSGDGDSPRPRKFSSKECARIYFSNTSSEHSSRSNSSTPRRVRHTTASSGYGSLSHLPPISYRKSSDPLNSLMSQSMYVQSPGMHIDEPKCTSLSQRRLYYEDSSETYIPSSPSLTTLKDFMMTNDDETFDDFDFDNDDVKSVISSASTSRIFSVDNRMSKYQKNQSLRQFLNSPVRLRKRGDTSRRDAVEAGFEPRDTVPRCHSTQSLRDVQRVRSYNNSQFQASDLSLNPNGSIRAACDSTSGSVAPTAVVNPARNHVISHRQQHHTSYEKDLIPHHNIDVDRRRSLQALNGSSALYQLNNGGSPNGVRSQFSPSDLSIHTPVHHVGSRVRVSSVNQICDSNSAPQFSIDQRRSVHNIGNPVRNSFVDGIKTTSTPKNQIAVAPLAHKSRHLSESRDEMRGGAERRGSGGQMNLPAYTNYLIRHSGEERLVDGPVTNASDARIAYLEKRIRELELTQKEQSSHSTPSQSRHSSSKSSHFNGSSNLSTSEQLRLQEMSDELANKDRKVTSLESKLLKAYQRIERLNEEYDGKIKNLMYDSERARDDLTRCVDKIQQLENELDETRAAVQNGDHANEQEYHELRDKIWKQERELQESRTLLTRLREKEAEFERMRSEKGYLELKNENLNKKLEAKKRAVEELERSVSTLRLEQTICQQSCSSGSTPLADEMEIMSDIRPSLARPYTKAHSTLGSHNMSPLSHSKSSGLTKSFSNFALNSSKQRDDITANMSRSIREQNRHITMCRAMVVCLKDTVDRMARGENPDVARLLGVKLNVMSESEMEDDEDHEADASQPFSMMSAESALSKQCGKLADLDKDLDTIRCQLADWHGQTNAEGDGDRDVCRVQ.

Residues 1–10 show a composition bias toward polar residues; the sequence is MSNERVSTGS. Disordered regions lie at residues 1–134, 250–277, 465–491, and 533–563; these read MSNE…HLPP, PVRLRKRGDTSRRDAVEAGFEPRDTVPR, KSRHLSESRDEMRGGAERRGSGGQMNL, and TQKEQSSHSTPSQSRHSSSKSSHFNGSSNLS. Composition is skewed to basic and acidic residues over residues 43-54 and 70-94; these read SMERKDMPDRPK and PKDRSSDSGDGDSPRPRKFSSKECA. Residues 99–113 show a composition bias toward low complexity; that stretch reads SNTSSEHSSRSNSST. Composition is skewed to basic and acidic residues over residues 256–276 and 468–484; these read RGDTSRRDAVEAGFEPRDTVP and HLSESRDEMRGGAERRG. Positions 539–563 are enriched in low complexity; the sequence is SHSTPSQSRHSSSKSSHFNGSSNLS. Residues 564–728 adopt a coiled-coil conformation; sequence TSEQLRLQEM…RSVSTLRLEQ (165 aa).

It is found in the cytoplasm. Its subcellular location is the cytoskeleton. The protein localises to the apical cell membrane. The protein resides in the cell junction. It localises to the hemidesmosome. It is found in the adherens junction. Functionally, plays a role in the assembly of microtubule arrays in the germline acting redundantly with ptrn-1 to control circumferential microtubule assembly along the body which is necessary for larval development, viability, and morphology and integrity of the epidermis. Required for microtubule stability and anchorage by binding to microtubule minus ends. Recruited to hemidesomosomes in early embryonic elongation to direct the nucleation and growth of non-centrosomal microtubules. Its function is as follows. Required for normal nuclear migration in the embryonic epidermis. In terms of biological role, directs the assembly of non-centrosomal microtubule arrays that determine the position of nuclei within intracellular compartments in the epidermis and this is independent of ptrn-1 activity. In Caenorhabditis elegans, this protein is Non-centrosomal microtubule array protein 1.